A 540-amino-acid chain; its full sequence is Cytochrome P450 27C1 (540 aa).

Position 486 (C486) interacts with heme.

It belongs to the cytochrome P450 family. It depends on heme as a cofactor. In terms of tissue distribution, following L-thyroxine, expressed in the retinal pigment epithelium (at protein level).

The protein localises to the membrane. It catalyses the reaction all-trans-retinol + 2 reduced [adrenodoxin] + O2 + 2 H(+) = all-trans-3,4-didehydroretinol + 2 oxidized [adrenodoxin] + 2 H2O. Efficiently catalyzes the conversion of all-trans retinol (also called vitamin A1, the precursor of 11-cis retinal) to 3,4-didehydroretinol (also called vitamin A2, the precursor of 11-cis 3,4-didehydroretinal). Also acts on all-trans retinal and all-trans retinoic acid. The replacement of 11-cis retinal chromophore in photopigments with 11-cis 3,4-didehydroretinal enhances sensitivity to long-wavelength light. This may improve vision in fresh water which is often turbid. The sequence is that of Cytochrome P450 27C1 (cyp27c1) from Danio rerio (Zebrafish).